The following is a 332-amino-acid chain: Phosphate acyltransferase (332 aa).

This sequence belongs to the PlsX family. Homodimer. Probably interacts with PlsY.

It is found in the cytoplasm. The enzyme catalyses a fatty acyl-[ACP] + phosphate = an acyl phosphate + holo-[ACP]. Its pathway is lipid metabolism; phospholipid metabolism. Its function is as follows. Catalyzes the reversible formation of acyl-phosphate (acyl-PO(4)) from acyl-[acyl-carrier-protein] (acyl-ACP). This enzyme utilizes acyl-ACP as fatty acyl donor, but not acyl-CoA. This chain is Phosphate acyltransferase, found in Streptococcus sanguinis (strain SK36).